Here is a 288-residue protein sequence, read N- to C-terminus: Ninja-family protein 6 (288 aa).

2 disordered regions span residues 1-50 and 66-207; these read MASR…KRPR and LHAD…TRTG. The segment covering 12 to 23 has biased composition (gly residues); the sequence is AGEGAGPPGDAG. Over residues 76–86 the composition is skewed to low complexity; that stretch reads LPLLRTTSLPT. Residues 91–103 show a composition bias toward basic and acidic residues; it reads ERWRRREMQSRRR. Positions 131 to 173 are enriched in polar residues; the sequence is RRSNASQGSNSASTTEQGIGGSMFNQSADAKSPSTSDNRNQND. Positions 195 to 207 are enriched in low complexity; that stretch reads RLRTLGSLTTRTG.

The protein belongs to the Ninja family.

Its subcellular location is the nucleus. This is Ninja-family protein 6 from Zea mays (Maize).